Reading from the N-terminus, the 81-residue chain is Costars family protein ABRACL (81 aa).

Belongs to the costars family.

The protein is Costars family protein ABRACL of Coturnix coturnix (Common quail).